The following is a 181-amino-acid chain: Acireductone dioxygenase (181 aa).

Positions 97, 99, 103, and 141 each coordinate Fe(2+). Ni(2+) contacts are provided by H97, H99, E103, and H141.

This sequence belongs to the acireductone dioxygenase (ARD) family. In terms of assembly, monomer. It depends on Fe(2+) as a cofactor. Requires Ni(2+) as cofactor.

It catalyses the reaction 1,2-dihydroxy-5-(methylsulfanyl)pent-1-en-3-one + O2 = 3-(methylsulfanyl)propanoate + CO + formate + 2 H(+). It carries out the reaction 1,2-dihydroxy-5-(methylsulfanyl)pent-1-en-3-one + O2 = 4-methylsulfanyl-2-oxobutanoate + formate + 2 H(+). It participates in amino-acid biosynthesis; L-methionine biosynthesis via salvage pathway; L-methionine from S-methyl-5-thio-alpha-D-ribose 1-phosphate: step 5/6. In terms of biological role, catalyzes 2 different reactions between oxygen and the acireductone 1,2-dihydroxy-3-keto-5-methylthiopentene (DHK-MTPene) depending upon the metal bound in the active site. Fe-containing acireductone dioxygenase (Fe-ARD) produces formate and 2-keto-4-methylthiobutyrate (KMTB), the alpha-ketoacid precursor of methionine in the methionine recycle pathway. Ni-containing acireductone dioxygenase (Ni-ARD) produces methylthiopropionate, carbon monoxide and formate, and does not lie on the methionine recycle pathway. The sequence is that of Acireductone dioxygenase from Pseudomonas fluorescens (strain ATCC BAA-477 / NRRL B-23932 / Pf-5).